The primary structure comprises 1355 residues: DNA-directed RNA polymerase subunit beta' (1355 aa).

Zn(2+) is bound by residues Cys219, Cys293, Cys300, and Cys303. Positions 1331 to 1355 (AEVEVDDEVDDDYEDDDEDDDDYED) are disordered.

It belongs to the RNA polymerase beta' chain family. RpoC2 subfamily. As to quaternary structure, in cyanobacteria the RNAP catalytic core is composed of 2 alpha, 1 beta, 1 beta', 1 gamma and 1 omega subunit. When a sigma factor is associated with the core the holoenzyme is formed, which can initiate transcription. Requires Zn(2+) as cofactor.

The enzyme catalyses RNA(n) + a ribonucleoside 5'-triphosphate = RNA(n+1) + diphosphate. Functionally, DNA-dependent RNA polymerase catalyzes the transcription of DNA into RNA using the four ribonucleoside triphosphates as substrates. The sequence is that of DNA-directed RNA polymerase subunit beta' from Trichormus variabilis (strain ATCC 29413 / PCC 7937) (Anabaena variabilis).